We begin with the raw amino-acid sequence, 426 residues long: Docking protein 3 (426 aa).

Positions 4-115 (PVKDGIIYVQ…WIEQLCQLAF (112 aa)) constitute a PH domain. An IRS-type PTB domain is found at 145–249 (DLTEFPVLVL…ACQQQGQESP (105 aa)). Residues 243-282 (QQGQESPQPSAQGLSNQPWGAEAEDPQCSPTLGRAHSGSH) form a disordered region. Residues 247-260 (ESPQPSAQGLSNQP) are compositionally biased toward polar residues. Position 331 is a phosphotyrosine (Y331). A disordered region spans residues 357-426 (GCRQAPEGHS…RDGPGARDWS (70 aa)). Basic residues predominate over residues 402–411 (KPQRTLRAKL).

Belongs to the DOK family. Type A subfamily. As to quaternary structure, homooligomer. Interacts with GRB2 and INPP5D/SHIP. In terms of processing, tyrosine-phosphorylated in the presence of GRB2.

The protein localises to the cytoplasm. It is found in the cell membrane. DOK proteins are enzymatically inert adaptor or scaffolding proteins. They provide a docking platform for the assembly of multimolecular signaling complexes. Plays a role as negative regulator of the mobilization of calcium ions and of calcium signaling. This is Docking protein 3 (DOK3) from Gallus gallus (Chicken).